Here is a 130-residue protein sequence, read N- to C-terminus: Metastasis-suppressor KiSS-1 (130 aa).

Residues 1 to 19 form the signal peptide; the sequence is MISMASWQLLLLLCVATYG. Positions 49 to 82 are disordered; it reads KESRYAESKPGSAGLRARRSSPCPPVEGPAGRQR. Cys-71 and Cys-85 are oxidised to a cystine. Tyr-110 is modified (phosphotyrosine). The essential for receptor binding and receptor activation stretch occupies residues 110–119; the sequence is YNWNSFGLRY. Tyr-119 is subject to Tyrosine amide.

This sequence belongs to the KISS1 family. In terms of tissue distribution, weak in all tissue types with highest levels in lung and 15- 17-day embryos. Expressed in areas of the hypothalamus implicated in the neuroendocrine regulation of gonadotropin secretion, including the anteroventral periventricular nucleus, the periventricular nucleus, and the arcuate nucleus.

Its subcellular location is the secreted. Functionally, metastasis suppressor protein. May regulate events downstream of cell-matrix adhesion, perhaps involving cytoskeletal reorganization. Generates a C-terminally amidated peptide, metastin which functions as the endogenous ligand of the G-protein coupled receptor GPR54. Activation of the receptor inhibits cell proliferation and cell migration, key characteristics of tumor metastasis. The receptor is also essential for normal gonadotropin-released hormone physiology and for puberty. The hypothalamic KiSS1/GPR54 system is a pivotal factor in central regulation of the gonadotropic axis at puberty and in adulthood. Intracerebroventricular administration induces an increase in serum LH and FSH levels in prepubertal male and female as well as in adult animals. This is Metastasis-suppressor KiSS-1 (Kiss1) from Mus musculus (Mouse).